A 382-amino-acid polypeptide reads, in one-letter code: Innexin-8 (382 aa).

4 helical membrane-spanning segments follow: residues Leu29–Gly49, Gln103–Trp123, Val187–Leu207, and Ile270–Phe290.

This sequence belongs to the pannexin family.

The protein localises to the cell membrane. It localises to the cell junction. Its subcellular location is the gap junction. Structural component of the gap junctions. This chain is Innexin-8 (inx-8), found in Caenorhabditis elegans.